We begin with the raw amino-acid sequence, 99 residues long: Phosphoribosyl-ATP pyrophosphatase (99 aa).

Belongs to the PRA-PH family.

The protein localises to the cytoplasm. It catalyses the reaction 1-(5-phospho-beta-D-ribosyl)-ATP + H2O = 1-(5-phospho-beta-D-ribosyl)-5'-AMP + diphosphate + H(+). It participates in amino-acid biosynthesis; L-histidine biosynthesis; L-histidine from 5-phospho-alpha-D-ribose 1-diphosphate: step 2/9. This is Phosphoribosyl-ATP pyrophosphatase from Methanosphaerula palustris (strain ATCC BAA-1556 / DSM 19958 / E1-9c).